A 157-amino-acid polypeptide reads, in one-letter code: SsrA-binding protein (157 aa).

Basic and acidic residues predominate over residues 135–151 (DKRETEKKRDWSREKGR). The interval 135–157 (DKRETEKKRDWSREKGRLLRARG) is disordered.

This sequence belongs to the SmpB family.

Its subcellular location is the cytoplasm. In terms of biological role, required for rescue of stalled ribosomes mediated by trans-translation. Binds to transfer-messenger RNA (tmRNA), required for stable association of tmRNA with ribosomes. tmRNA and SmpB together mimic tRNA shape, replacing the anticodon stem-loop with SmpB. tmRNA is encoded by the ssrA gene; the 2 termini fold to resemble tRNA(Ala) and it encodes a 'tag peptide', a short internal open reading frame. During trans-translation Ala-aminoacylated tmRNA acts like a tRNA, entering the A-site of stalled ribosomes, displacing the stalled mRNA. The ribosome then switches to translate the ORF on the tmRNA; the nascent peptide is terminated with the 'tag peptide' encoded by the tmRNA and targeted for degradation. The ribosome is freed to recommence translation, which seems to be the essential function of trans-translation. The polypeptide is SsrA-binding protein (Rhodopseudomonas palustris (strain BisB5)).